Here is a 354-residue protein sequence, read N- to C-terminus: Peptide chain release factor 1 (354 aa).

Residue Gln233 is modified to N5-methylglutamine.

It belongs to the prokaryotic/mitochondrial release factor family. Methylated by PrmC. Methylation increases the termination efficiency of RF1.

The protein localises to the cytoplasm. Functionally, peptide chain release factor 1 directs the termination of translation in response to the peptide chain termination codons UAG and UAA. The chain is Peptide chain release factor 1 from Clostridioides difficile (strain 630) (Peptoclostridium difficile).